The following is a 114-amino-acid chain: Reprimo-like protein (114 aa).

A helical membrane pass occupies residues 61–81 (VVQIAVLCVLSLTVMFGIFFL).

Belongs to the reprimo family.

The protein resides in the membrane. The chain is Reprimo-like protein (rprml) from Danio rerio (Zebrafish).